Consider the following 230-residue polypeptide: NAD(P)H-hydrate epimerase (230 aa).

In terms of domain architecture, YjeF N-terminal spans 11-218; that stretch reads AIAVDQELFN…ALQRKYELNL (208 aa). 61–65 provides a ligand contact to (6S)-NADPHX; the sequence is NNGGD. 2 residues coordinate K(+): asparagine 62 and aspartate 126. Residues 130–136 and aspartate 159 each bind (6S)-NADPHX; that span reads GFSFKPP. Serine 162 provides a ligand contact to K(+).

This sequence belongs to the NnrE/AIBP family. Requires K(+) as cofactor.

The enzyme catalyses (6R)-NADHX = (6S)-NADHX. The catalysed reaction is (6R)-NADPHX = (6S)-NADPHX. Catalyzes the epimerization of the S- and R-forms of NAD(P)HX, a damaged form of NAD(P)H that is a result of enzymatic or heat-dependent hydration. This is a prerequisite for the S-specific NAD(P)H-hydrate dehydratase to allow the repair of both epimers of NAD(P)HX. In Drosophila melanogaster (Fruit fly), this protein is NAD(P)H-hydrate epimerase.